The following is a 726-amino-acid chain: ORC ubiquitin ligase 1 (726 aa).

The segment at 18–56 (CHICLGKVRQPVICINNHVFCSICIDLWLKNNSQCPACR) adopts an RING-type; degenerate zinc-finger fold. Coiled-coil stretches lie at residues 87–129 (LRKT…TILD) and 155–270 (ETVA…MNSI). Phosphoserine is present on Ser-210. A disordered region spans residues 274–335 (ALPADGKGSK…ARQESTSKAE (62 aa)). The span at 280–290 (KGSKGSEEDVA) shows a compositional bias: basic and acidic residues. The segment covering 300–320 (KQPSSSTSSSSHLAKPSSSRL) has biased composition (low complexity). Polar residues predominate over residues 321-334 (CDTSSARQESTSKA). Phosphoserine occurs at positions 526, 553, 561, 568, 570, 719, and 721. Residues 687–726 (QSPWSTSFVPEKRNKNVNQSTKRKIQSSLSNASPSKATKS) form a disordered region. A compositionally biased stretch (polar residues) spans 702-726 (NVNQSTKRKIQSSLSNASPSKATKS).

As to quaternary structure, associates with ORC complex. Binds to chromatin; association is cell cycle-regulated, absent from mitotic chromosomes, is associated with chromatin from G1 and partially released from chromatin from mid S-phase. In terms of processing, auto-ubiquitinated.

It is found in the chromosome. The enzyme catalyses S-ubiquitinyl-[E2 ubiquitin-conjugating enzyme]-L-cysteine + [acceptor protein]-L-lysine = [E2 ubiquitin-conjugating enzyme]-L-cysteine + N(6)-ubiquitinyl-[acceptor protein]-L-lysine.. E3 ubiquitin ligase essential for DNA replication origin activation during S phase. Acts as a replication origin selector which selects the origins to be fired and catalyzes the multi-mono-ubiquitination of a subset of chromatin-bound ORC3 and ORC5 during S-phase. In Pongo abelii (Sumatran orangutan), this protein is ORC ubiquitin ligase 1 (OBI1).